We begin with the raw amino-acid sequence, 176 residues long: Cytidylate kinase (176 aa).

7 to 15 (GPPGSGTTS) serves as a coordination point for ATP.

Belongs to the cytidylate kinase family. Type 2 subfamily.

Its subcellular location is the cytoplasm. It catalyses the reaction CMP + ATP = CDP + ADP. It carries out the reaction dCMP + ATP = dCDP + ADP. The protein is Cytidylate kinase of Methanosphaerula palustris (strain ATCC BAA-1556 / DSM 19958 / E1-9c).